A 156-amino-acid polypeptide reads, in one-letter code: Transcription elongation factor GreA (156 aa).

A coiled-coil region spans residues 2–27 (EKTFPMTKEGLDKLKAELENLKLVKR).

This sequence belongs to the GreA/GreB family.

Necessary for efficient RNA polymerase transcription elongation past template-encoded arresting sites. The arresting sites in DNA have the property of trapping a certain fraction of elongating RNA polymerases that pass through, resulting in locked ternary complexes. Cleavage of the nascent transcript by cleavage factors such as GreA or GreB allows the resumption of elongation from the new 3'terminus. GreA releases sequences of 2 to 3 nucleotides. The polypeptide is Transcription elongation factor GreA (Lactococcus lactis subsp. cremoris (strain MG1363)).